Consider the following 885-residue polypeptide: 3-hydroxy-3-methylglutaryl-coenzyme A reductase (885 aa).

Residues 1–9 (MLSRLFRMH) lie on the Cytoplasmic side of the membrane. A helical transmembrane segment spans residues 10–39 (GLFVASHPWEVIVGTVTLTICMMSMNMFTG). Residues 40–56 (NDKICGWNYECPKFEED) lie on the Lumenal side of the membrane. Residues 57 to 78 (VLSSDIIILTITRCIAILYIYF) traverse the membrane as a helical segment. Residues 61–218 (DIIILTITRC…MTFFPACVSL (158 aa)) form the SSD domain. Residues 75–78 (YIYF) carry the INSIG-binding motif motif. At 79 to 89 (QFQNLRQLGSK) the chain is on the cytoplasmic side. Residue Lys89 forms a Glycyl lysine isopeptide (Lys-Gly) (interchain with G-Cter in ubiquitin) linkage. Residues 90-114 (YILGIAGLFTIFSSFVFSTVVIHFL) form a helical membrane-spanning segment. The Lumenal portion of the chain corresponds to 115–123 (DKELTGLNE). Residues 124-149 (ALPFFLLLIDLSRASALAKFALSSNS) traverse the membrane as a helical segment. The Cytoplasmic segment spans residues 150 to 159 (QDEVRENIAR). The chain crosses the membrane as a helical span at residues 160 to 187 (GMAILGPTFTLDALVECLVIGVGTMSGV). Topologically, residues 188–191 (RQLE) are lumenal. The chain crosses the membrane as a helical span at residues 192–220 (IMCCFGCMSVLATYFVFMTFFPACVSLVL). Topologically, residues 221 to 248 (ELSRESREGRPIWQLSHFARVLEGEENK) are cytoplasmic. Residue Lys248 forms a Glycyl lysine isopeptide (Lys-Gly) (interchain with G-Cter in ubiquitin) linkage. Residues 249-275 (PNPVTQRVKIIMSLGLVLVHAHSRWIA) traverse the membrane as a helical segment. Residues 276–314 (DPSPQNSTADNSKVSLGLDENVSKRIEPSVSLWQFYLSK) lie on the Lumenal side of the membrane. Residues Asn281 and Asn296 are each glycosylated (N-linked (GlcNAc...) asparagine). Residues 315–339 (MISMDIEQVITLTLALLLAVKYIFF) traverse the membrane as a helical segment. The Cytoplasmic segment spans residues 340–885 (EQAETESTLS…LQGTCTKKAA (546 aa)). Residues Glu558, Lys688, and Asp764 each act as charge relay system in the active site. His863 serves as the catalytic Proton donor. Phosphoserine; by AMPK is present on Ser869.

It belongs to the HMG-CoA reductase family. Homotetramer. Homodimer. Interacts (via its SSD) with INSIG1; the interaction, accelerated by sterols, leads to the recruitment of HMGCR to AMFR/gp78 for its ubiquitination by the sterol-mediated ERAD pathway. Interacts with UBIAD1. Undergoes sterol-mediated ubiquitination and ER-associated degradation (ERAD). Accumulation of sterols in the endoplasmic reticulum (ER) membrane, triggers binding of the reductase to the ER membrane protein INSIG1 or INSIG2. The INSIG1 binding leads to the recruitment of the ubiquitin ligase, AMFR/gp78, RNF139 or RNF145, initiating ubiquitination of the reductase. The ubiquitinated reductase is then extracted from the ER membrane and delivered to cytosolic 26S proteosomes by a mechanism probably mediated by the ATPase Valosin-containing protein VCP/p97. The INSIG2-binding leads to the recruitment of the ubiquitin ligase RNF139, initiating ubiquitination of the reductase. Lys-248 is the main site of ubiquitination. Ubiquitination is enhanced by the presence of a geranylgeranylated protein. In terms of processing, N-glycosylated. Deglycosylated by NGLY1 on release from the endoplasmic reticulum (ER) in a sterol-mediated manner. Post-translationally, phosphorylated. Phosphorylation at Ser-869 reduces the catalytic activity. In terms of tissue distribution, high expression found in liver, heart, kidney, bladder and subcutaneous fat. Lower levels in lung, uterus and large intestine. Lowest levels in cerebrum, spleen, spinal cord, stomach, ovary, longissimus muscle, and small intestine.

The protein localises to the endoplasmic reticulum membrane. It localises to the peroxisome membrane. The enzyme catalyses (R)-mevalonate + 2 NADP(+) + CoA = (3S)-3-hydroxy-3-methylglutaryl-CoA + 2 NADPH + 2 H(+). The protein operates within metabolic intermediate biosynthesis; (R)-mevalonate biosynthesis; (R)-mevalonate from acetyl-CoA: step 3/3. Its activity is regulated as follows. Regulated by a negative feedback mechanism through sterols and non-sterol metabolites derived from mevalonate. Phosphorylation at Ser-869 down-regulates the catalytic activity. Its function is as follows. Catalyzes the conversion of (3S)-hydroxy-3-methylglutaryl-CoA (HMG-CoA) to mevalonic acid, the rate-limiting step in the synthesis of cholesterol and other isoprenoids, thus plays a critical role in cellular cholesterol homeostasis. The protein is 3-hydroxy-3-methylglutaryl-coenzyme A reductase (HMGCR) of Sus scrofa (Pig).